Here is a 1076-residue protein sequence, read N- to C-terminus: MIESILSGAVRFRWLVLFLTAVVGAIGAWQLNLLPIDVTPDITNKQVQINTVVPTLSPVEVEKRVTYPIETAIAGLNGVENMRSLSRNGFSQVTVIFKESSNLYFMRQQVTERLAQARPNLPAGVEPQMGPVSTGLGEVFHYSVEYEFPDGKGAKVKDGEPGWQSDGSFLTERGERLTDRVSKLAYLRTVQDWIIRPQLRTTAGVADVDSLGGYVKQFVVEPDAAKMAAYGISFEELAQALEDANLSVGANFIRRSGESYLVRADARIKSADEIARAVIAQRQGVPITVGQVANINVGGELRSGAASRNGYETVVGSALMLVGANSRTVAQAVGDKLEEIKKTLPPGVVIVPTLNRSQLVMATIKTVAKNLVEGAALVVVILFALLGNWRAAVIAALVIPLSLLISAIGMNGLNISGNLMSLGALDFGLIIDGAVIIVENSLRRLAERQHHEGRLLTLKERLEEVILSSREMVRPTVYGQLVIFMVFLPCLTFQGVEGKMFSPMVITLMLALASAFVLSLTFVPAMVAVLLRKKVSEKEVRVIAVTKERYRPLLERAVARPMPFLGAALVTLALAAMAFTFVGREFMPTLDEQNLNLSSVRIPSTSIDQSVAIDLPLERAVLSLPEVQTVYSKAGTASLAADPMPPNASDNYIILKPKSEWPEGITTKEQVIERIREKTAPMVSNNYDVTQPIQMRFNELIGGVRSDVAVKIYGENLDDLASTAQKIAAVLRKTPGATDTRVPLTGGFPTFDIVFDRAAIARYGLTVKEVADTVAAAMAGRPSGQIFDGDRRYDIVIRLPGQQRENLDVLGALPVMLPAVEGQPRASVPLRQLVQFRFTQGLNEVSRDNGKRRVYVEANVGGRDLGSFVDDAAKRIAAEVKLPPGMYIEWGGQFQNLQAATQRLAIIVPLCFILIAATLYMAIGSAALTATVLTAVPLALAGGVFALVLRDIPFSISASVGFIAVSGVAVLNGLVLISAIRKRLEDGAAPNEAVIEGAMERVRPVLMTALVASLGFVPMAIATGTGAEVQKPLATVVIGGLITATVLTLFVLPAVCGMVLRRQKKLEKPGGELLEA.

Helical transmembrane passes span 14-34 (WLVLFLTAVVGAIGAWQLNLL), 367-387 (VAKNLVEGAALVVVILFALLG), 391-411 (AAVIAALVIPLSLLISAIGMN), 419-439 (LMSLGALDFGLIIDGAVIIVE), 476-496 (TVYGQLVIFMVFLPCLTFQGV), 503-523 (PMVITLMLALASAFVLSLTFV), 562-582 (MPFLGAALVTLALAAMAFTFV), 904-924 (LAIIVPLCFILIAATLYMAIG), 929-949 (TATVLTAVPLALAGGVFALVL), 960-980 (VGFIAVSGVAVLNGLVLISAI), 1004-1024 (PVLMTALVASLGFVPMAIATG), and 1036-1056 (VVIGGLITATVLTLFVLPAVC).

It belongs to the resistance-nodulation-cell division (RND) (TC 2.A.6) family.

The protein localises to the cell membrane. In terms of biological role, component of the NCC cation-efflux system that confers resistance to nickel, cobalt and cadmium. May form a membrane tunnel, which allows ion transport across the membrane. The sequence is that of Nickel-cobalt-cadmium resistance protein NccA (nccA) from Alcaligenes xylosoxydans xylosoxydans (Achromobacter xylosoxidans).